The following is a 418-amino-acid chain: Glutamyl-tRNA reductase (418 aa).

Residues 49–52 (TCNR), Ser-109, 114–116 (EPQ), and Gln-120 contribute to the substrate site. Cys-50 functions as the Nucleophile in the catalytic mechanism. An NADP(+)-binding site is contributed by 189–194 (GAGETI).

This sequence belongs to the glutamyl-tRNA reductase family. In terms of assembly, homodimer.

The enzyme catalyses (S)-4-amino-5-oxopentanoate + tRNA(Glu) + NADP(+) = L-glutamyl-tRNA(Glu) + NADPH + H(+). It participates in porphyrin-containing compound metabolism; protoporphyrin-IX biosynthesis; 5-aminolevulinate from L-glutamyl-tRNA(Glu): step 1/2. Its function is as follows. Catalyzes the NADPH-dependent reduction of glutamyl-tRNA(Glu) to glutamate 1-semialdehyde (GSA). This is Glutamyl-tRNA reductase from Pectobacterium atrosepticum (strain SCRI 1043 / ATCC BAA-672) (Erwinia carotovora subsp. atroseptica).